Reading from the N-terminus, the 389-residue chain is GTPase Obg (389 aa).

Residues 1–159 (MKFVDEAVIR…RSLKLELMLL (159 aa)) enclose the Obg domain. Residues 122-144 (FHGLGNTRFKSSTNRAPRQKTLG) are disordered. An OBG-type G domain is found at 160-333 (ADVGLLGMPN…LSLKLIDFIE (174 aa)). Residues 166–173 (GMPNAGKS), 191–195 (FTTLV), 213–216 (DIPG), 283–286 (NKTD), and 314–316 (SAY) contribute to the GTP site. Residues Ser173 and Thr193 each contribute to the Mg(2+) site.

It belongs to the TRAFAC class OBG-HflX-like GTPase superfamily. OBG GTPase family. In terms of assembly, monomer. It depends on Mg(2+) as a cofactor.

Its subcellular location is the cytoplasm. Functionally, an essential GTPase which binds GTP, GDP and possibly (p)ppGpp with moderate affinity, with high nucleotide exchange rates and a fairly low GTP hydrolysis rate. Plays a role in control of the cell cycle, stress response, ribosome biogenesis and in those bacteria that undergo differentiation, in morphogenesis control. This is GTPase Obg from Shewanella woodyi (strain ATCC 51908 / MS32).